The following is a 194-amino-acid chain: Serine/threonine-protein kinase mos (194 aa).

The region spanning 47-194 (LCLLHLLGSG…HLDLKPANIF (148 aa)) is the Protein kinase domain. ATP contacts are provided by residues 53–61 (LGSGGFGSV) and Lys74. The Proton acceptor role is filled by Asp187.

The protein belongs to the protein kinase superfamily. Ser/Thr protein kinase family.

The catalysed reaction is L-seryl-[protein] + ATP = O-phospho-L-seryl-[protein] + ADP + H(+). It catalyses the reaction L-threonyl-[protein] + ATP = O-phospho-L-threonyl-[protein] + ADP + H(+). This chain is Serine/threonine-protein kinase mos (MOS), found in Atheris squamigera (Variable bush viper).